The sequence spans 499 residues: Maturase K (499 aa).

This sequence belongs to the intron maturase 2 family. MatK subfamily.

It is found in the plastid. The protein localises to the chloroplast. Functionally, usually encoded in the trnK tRNA gene intron. Probably assists in splicing its own and other chloroplast group II introns. The protein is Maturase K of Camellia sinensis (Tea plant).